The following is a 428-amino-acid chain: Histidine--tRNA ligase (428 aa).

It belongs to the class-II aminoacyl-tRNA synthetase family. Homodimer.

It localises to the cytoplasm. It catalyses the reaction tRNA(His) + L-histidine + ATP = L-histidyl-tRNA(His) + AMP + diphosphate + H(+). The sequence is that of Histidine--tRNA ligase from Chlamydia trachomatis serovar A (strain ATCC VR-571B / DSM 19440 / HAR-13).